The primary structure comprises 129 residues: Glycine cleavage system H protein (129 aa).

The 83-residue stretch at 24–106 (EAVVGITEHA…YGAGWLFRIK (83 aa)) folds into the Lipoyl-binding domain. Position 65 is an N6-lipoyllysine (K65).

The protein belongs to the GcvH family. The glycine cleavage system is composed of four proteins: P, T, L and H. It depends on (R)-lipoate as a cofactor.

Its function is as follows. The glycine cleavage system catalyzes the degradation of glycine. The H protein shuttles the methylamine group of glycine from the P protein to the T protein. The sequence is that of Glycine cleavage system H protein from Aeromonas hydrophila subsp. hydrophila (strain ATCC 7966 / DSM 30187 / BCRC 13018 / CCUG 14551 / JCM 1027 / KCTC 2358 / NCIMB 9240 / NCTC 8049).